A 205-amino-acid polypeptide reads, in one-letter code: Holliday junction branch migration complex subunit RuvA (205 aa).

Positions 1–64 (MIGRLRGVLV…EDAQLLYGFI (64 aa)) are domain I. Residues 65–143 (TKQERALFRL…SLMEASAGSE (79 aa)) are domain II. A flexible linker region spans residues 144-156 (REFVLQSNYSPAP). A domain III region spans residues 157 to 205 (TVNSAEEDAISALISLGYKPPQASKSVSAAYKEGMDSETLIKAALKSML).

The protein belongs to the RuvA family. As to quaternary structure, homotetramer. Forms an RuvA(8)-RuvB(12)-Holliday junction (HJ) complex. HJ DNA is sandwiched between 2 RuvA tetramers; dsDNA enters through RuvA and exits via RuvB. An RuvB hexamer assembles on each DNA strand where it exits the tetramer. Each RuvB hexamer is contacted by two RuvA subunits (via domain III) on 2 adjacent RuvB subunits; this complex drives branch migration. In the full resolvosome a probable DNA-RuvA(4)-RuvB(12)-RuvC(2) complex forms which resolves the HJ.

It is found in the cytoplasm. Its function is as follows. The RuvA-RuvB-RuvC complex processes Holliday junction (HJ) DNA during genetic recombination and DNA repair, while the RuvA-RuvB complex plays an important role in the rescue of blocked DNA replication forks via replication fork reversal (RFR). RuvA specifically binds to HJ cruciform DNA, conferring on it an open structure. The RuvB hexamer acts as an ATP-dependent pump, pulling dsDNA into and through the RuvAB complex. HJ branch migration allows RuvC to scan DNA until it finds its consensus sequence, where it cleaves and resolves the cruciform DNA. The polypeptide is Holliday junction branch migration complex subunit RuvA (Shewanella baltica (strain OS223)).